Here is a 97-residue protein sequence, read N- to C-terminus: Aspartyl/glutamyl-tRNA(Asn/Gln) amidotransferase subunit C (97 aa).

A disordered region spans residues 58–78 (LPQGRLRKDTPRDPLDRENAL). Basic and acidic residues predominate over residues 63–77 (LRKDTPRDPLDRENA).

The protein belongs to the GatC family. In terms of assembly, heterotrimer of A, B and C subunits.

It carries out the reaction L-glutamyl-tRNA(Gln) + L-glutamine + ATP + H2O = L-glutaminyl-tRNA(Gln) + L-glutamate + ADP + phosphate + H(+). The catalysed reaction is L-aspartyl-tRNA(Asn) + L-glutamine + ATP + H2O = L-asparaginyl-tRNA(Asn) + L-glutamate + ADP + phosphate + 2 H(+). Functionally, allows the formation of correctly charged Asn-tRNA(Asn) or Gln-tRNA(Gln) through the transamidation of misacylated Asp-tRNA(Asn) or Glu-tRNA(Gln) in organisms which lack either or both of asparaginyl-tRNA or glutaminyl-tRNA synthetases. The reaction takes place in the presence of glutamine and ATP through an activated phospho-Asp-tRNA(Asn) or phospho-Glu-tRNA(Gln). The protein is Aspartyl/glutamyl-tRNA(Asn/Gln) amidotransferase subunit C of Saccharolobus islandicus (strain Y.N.15.51 / Yellowstone #2) (Sulfolobus islandicus).